The following is a 342-amino-acid chain: MNIMRTAMLLAFMTALFMGVGFLIGGKGGMMIALVIAGAMNLFSYWNSDRMVLSAYHAQEVDPRNAPEFYEIVRGLTQNAGLPMPKVYIFDNPQPNAFATGRNPQNAAVAASTGLLQALTPEEVAGVMAHELAHVEHRDTLTMTITATLAGAISMLGNFAFFFGGRRDENGNGGGIIGPLVAMIVAPFAAMLVQMAISRTREYAADRRGAEICGNPLWLASALAKIAGAHQPNYQAERNPATAHMFIINPLSGQKMDSLFSTHPDTSNRIAALQALAQEMGGRQANVYRPQHSKPAASGPWGSSAERSTDDPWGVKGGASTRSVPKIGRRGKDNDAPKGPWN.

2 helical membrane passes run 6–26 and 28–48; these read TAML…LIGG and GGMM…YWNS. Histidine 130 is a Zn(2+) binding site. Glutamate 131 is a catalytic residue. Histidine 134 lines the Zn(2+) pocket. 2 helical membrane passes run 145 to 165 and 173 to 193; these read ITAT…FFGG and GGGI…AMLV. Residue glutamate 202 coordinates Zn(2+). A disordered region spans residues 290-342; it reads PQHSKPAASGPWGSSAERSTDDPWGVKGGASTRSVPKIGRRGKDNDAPKGPWN.

Belongs to the peptidase M48B family. Zn(2+) is required as a cofactor.

The protein resides in the cell inner membrane. The sequence is that of Protease HtpX homolog from Allorhizobium ampelinum (strain ATCC BAA-846 / DSM 112012 / S4) (Agrobacterium vitis (strain S4)).